We begin with the raw amino-acid sequence, 1343 residues long: DNA-directed RNA polymerase subunit beta (1343 aa).

It belongs to the RNA polymerase beta chain family. In terms of assembly, the RNAP catalytic core consists of 2 alpha, 1 beta, 1 beta' and 1 omega subunit. When a sigma factor is associated with the core the holoenzyme is formed, which can initiate transcription.

It carries out the reaction RNA(n) + a ribonucleoside 5'-triphosphate = RNA(n+1) + diphosphate. In terms of biological role, DNA-dependent RNA polymerase catalyzes the transcription of DNA into RNA using the four ribonucleoside triphosphates as substrates. The chain is DNA-directed RNA polymerase subunit beta from Shewanella violacea.